The following is a 736-amino-acid chain: Zinc finger MYND domain-containing protein 15 (736 aa).

Disordered regions lie at residues serine 70–proline 94 and leucine 109–glutamate 192. Acidic residues predominate over residues glutamate 110–glutamate 123. 2 stretches are compositionally biased toward basic and acidic residues: residues histidine 124–proline 135 and alanine 165–arginine 185. Zn(2+) is bound by residues cysteine 307, cysteine 310, cysteine 322, cysteine 325, cysteine 331, cysteine 335, histidine 349, and cysteine 353. The MYND-type zinc-finger motif lies at cysteine 307–cysteine 353. 2 disordered regions span residues aspartate 556 to arginine 583 and glycine 696 to arginine 736. Positions glycine 704–proline 718 are enriched in pro residues. Over residues alanine 719–arginine 736 the composition is skewed to basic residues.

Interacts with HDAC1, HDAC3, HDAC6 and, to a lesser extent, with HDAC7. In terms of tissue distribution, testis-specific. Expressed in pachytene spermatocytes and all developing spermatids, but not in Sertoli, nor Leydig cells (at protein level).

The protein resides in the nucleus. It localises to the cytoplasm. Functionally, acts as a transcriptional repressor through interaction with histone deacetylases (HDACs). May regulate haploid genes important for spermiogenesis. The sequence is that of Zinc finger MYND domain-containing protein 15 (Zmynd15) from Mus musculus (Mouse).